The chain runs to 455 residues: Ribosomal protein uS12 methylthiotransferase RimO (455 aa).

An MTTase N-terminal domain is found at 10-126 (RKVSMISLGC…ILELIEAHDR (117 aa)). Positions 19, 55, 89, 164, 168, and 171 each coordinate [4Fe-4S] cluster. In terms of domain architecture, Radical SAM core spans 150-380 (SSPFYSTYVK…MKAQQRVSFR (231 aa)). The 69-residue stretch at 383–451 (RALIGRVEPV…EYDLIGEIVD (69 aa)) folds into the TRAM domain.

Belongs to the methylthiotransferase family. RimO subfamily. [4Fe-4S] cluster is required as a cofactor.

It is found in the cytoplasm. It carries out the reaction L-aspartate(89)-[ribosomal protein uS12]-hydrogen + (sulfur carrier)-SH + AH2 + 2 S-adenosyl-L-methionine = 3-methylsulfanyl-L-aspartate(89)-[ribosomal protein uS12]-hydrogen + (sulfur carrier)-H + 5'-deoxyadenosine + L-methionine + A + S-adenosyl-L-homocysteine + 2 H(+). In terms of biological role, catalyzes the methylthiolation of an aspartic acid residue of ribosomal protein uS12. This is Ribosomal protein uS12 methylthiotransferase RimO from Syntrophotalea carbinolica (strain DSM 2380 / NBRC 103641 / GraBd1) (Pelobacter carbinolicus).